A 1068-amino-acid chain; its full sequence is Probable ATPase FE772_23070 (1068 aa).

An ATP-binding site is contributed by 217 to 224 (GGGGAGKT).

Involved in defense against bacteriophages. When this probable 4 gene operon (bGSDM-FE772_23060-FE772_23065-FE772_23070) is inserted into E.coli it provides nearly 100-fold protection against phages T5 and T6 and about 8-fold against phage T4. The operon without bGSDM no longer protects against phage. Probably a nucleotide hydrolase, possibly of ATP. In Lysobacter enzymogenes, this protein is Probable ATPase FE772_23070.